The sequence spans 432 residues: MSTLIRIALFALALMAGAAQAADPLVISSGNDRAIPIAVVPFGFQGGNVLPEDMSNIIGNDLRNSGYFEPLPRQNMISQPAQASEVIFRDWKAVGVNYVMVGNIVPAGGRLQVQYALFDVGTEQQVLTGSVTGSTDQLRDMSHYIADQSFEKLTGIKGAFSTKMLYVTAERFSVDNTRYTLQRSDYDGARPVTLLQSREPIVSPRFSPDGRRIAYVSFEQKRPRIFIQYVDTGRREQITNFEGLNGAPAFSPDGNRLAFVLSRDGNPEIYVMDLGSRALRRLTNNLAIDTEPFWGKDGSTLYFTSDRGGKPQIYKMNVNSGAVDRVTFIGNYNANPKLSADEKTLVMVHRQQGYTNFQIAAQDLQRGNLRVLSNTTLDDSPTVAPNGTMLIYATRQQDRGVLMLVSINGRVRIPLPTAQGDVREPSWSPYLN.

The N-terminal stretch at 1–21 (MSTLIRIALFALALMAGAAQA) is a signal peptide.

The protein belongs to the TolB family. As to quaternary structure, the Tol-Pal system is composed of five core proteins: the inner membrane proteins TolA, TolQ and TolR, the periplasmic protein TolB and the outer membrane protein Pal. They form a network linking the inner and outer membranes and the peptidoglycan layer.

The protein localises to the periplasm. Part of the Tol-Pal system, which plays a role in outer membrane invagination during cell division and is important for maintaining outer membrane integrity. The chain is Tol-Pal system protein TolB from Pseudomonas aeruginosa (strain ATCC 15692 / DSM 22644 / CIP 104116 / JCM 14847 / LMG 12228 / 1C / PRS 101 / PAO1).